Reading from the N-terminus, the 573-residue chain is Vacuolar protein 8 (573 aa).

The tract at residues 1–36 is disordered; that stretch reads MAASAADRMGRQRMSGLSCSAPPRPTVVTNPGNKQD. The span at 27–36 shows a compositional bias: polar residues; it reads VVTNPGNKQD. ARM repeat units follow at residues 60–97, 98–137, 139–178, 180–219, 221–260, 264–303, 305–344, 346–386, and 430–469; these read NRGE…FAEI, TEKD…NLAV, NENK…NLAT, EANK…NMTH, DQNR…NIAV, NRKK…NLAS, SDYQ…NISI, PLNE…NLAA, and DELK…NLSS.

It belongs to the beta-catenin family.

The protein localises to the vacuole membrane. In terms of biological role, functions in both vacuole inheritance and protein targeting from the cytoplasm to vacuole. In Yarrowia lipolytica (strain CLIB 122 / E 150) (Yeast), this protein is Vacuolar protein 8 (VAC8).